A 151-amino-acid chain; its full sequence is Putative pre-16S rRNA nuclease (151 aa).

Belongs to the YqgF nuclease family.

Its subcellular location is the cytoplasm. Its function is as follows. Could be a nuclease involved in processing of the 5'-end of pre-16S rRNA. In Chlamydia pneumoniae (Chlamydophila pneumoniae), this protein is Putative pre-16S rRNA nuclease.